A 290-amino-acid chain; its full sequence is Pyridoxal kinase PdxY (290 aa).

Substrate is bound by residues serine 12 and threonine 47 to glutamine 48. ATP contacts are provided by residues aspartate 114, glutamate 151, lysine 184, and arginine 211–leucine 214. Aspartate 225 lines the substrate pocket.

The protein belongs to the pyridoxine kinase family. PdxY subfamily. As to quaternary structure, homodimer. Mg(2+) is required as a cofactor.

The catalysed reaction is pyridoxal + ATP = pyridoxal 5'-phosphate + ADP + H(+). Its pathway is cofactor metabolism; pyridoxal 5'-phosphate salvage; pyridoxal 5'-phosphate from pyridoxal: step 1/1. Its function is as follows. Pyridoxal kinase involved in the salvage pathway of pyridoxal 5'-phosphate (PLP). Catalyzes the phosphorylation of pyridoxal to PLP. This chain is Pyridoxal kinase PdxY, found in Pseudomonas putida (strain W619).